The following is a 209-amino-acid chain: Ribosomal RNA large subunit methyltransferase E (209 aa).

S-adenosyl-L-methionine is bound by residues glycine 63, tryptophan 65, aspartate 83, aspartate 99, and aspartate 124. The active-site Proton acceptor is the lysine 164.

Belongs to the class I-like SAM-binding methyltransferase superfamily. RNA methyltransferase RlmE family.

The protein localises to the cytoplasm. The catalysed reaction is uridine(2552) in 23S rRNA + S-adenosyl-L-methionine = 2'-O-methyluridine(2552) in 23S rRNA + S-adenosyl-L-homocysteine + H(+). Specifically methylates the uridine in position 2552 of 23S rRNA at the 2'-O position of the ribose in the fully assembled 50S ribosomal subunit. The chain is Ribosomal RNA large subunit methyltransferase E from Shewanella pealeana (strain ATCC 700345 / ANG-SQ1).